Consider the following 353-residue polypeptide: Phenol 2-monooxygenase, reductase component DmpP (353 aa).

The 2Fe-2S ferredoxin-type domain maps to 3–93; it reads YNVTIEPTGE…DLVIEADVDA (91 aa). Positions 37, 42, 45, and 77 each coordinate [2Fe-2S] cluster. The FAD-binding FR-type domain occupies 102-201; that stretch reads VEDYRGVVSA…SGPYGQFFVR (100 aa).

In terms of assembly, the multicomponent enzyme phenol hydroxylase is formed by DmpL (P1 component), DmpM (P2 component), DmpN (P3 component), DmpO (P4 component) and DmpP (P5 component). FAD is required as a cofactor. The cofactor is [2Fe-2S] cluster.

It catalyses the reaction phenol + NADH + O2 + H(+) = catechol + NAD(+) + H2O. Its pathway is aromatic compound metabolism; phenol degradation. Functionally, part of a multicomponent enzyme which catalyzes the degradation of phenol and some of its methylated derivatives. DmpP probably transfers electrons from NADH, via FAD and the iron-sulfur center, to the oxygenase component of the complex. Required for growth on phenol and for in vitro phenol hydroxylase activity. This chain is Phenol 2-monooxygenase, reductase component DmpP, found in Pseudomonas sp. (strain CF600).